Consider the following 191-residue polypeptide: Cell division protein SepF (191 aa).

The disordered stretch occupies residues 150–191 (TSSSPEEASPSSVSPKNTPQYSVENNTAPEPAWGNSKLSAFS). Positions 151–164 (SSSPEEASPSSVSP) are enriched in low complexity. A compositionally biased stretch (polar residues) spans 165-177 (KNTPQYSVENNTA).

This sequence belongs to the SepF family. In terms of assembly, homodimer. Interacts with FtsZ.

The protein localises to the cytoplasm. Its function is as follows. Cell division protein that is part of the divisome complex and is recruited early to the Z-ring. Probably stimulates Z-ring formation, perhaps through the cross-linking of FtsZ protofilaments. Its function overlaps with FtsA. The polypeptide is Cell division protein SepF (Prochlorococcus marinus (strain MIT 9312)).